A 194-amino-acid polypeptide reads, in one-letter code: Putative manganese efflux pump MntP (194 aa).

6 helical membrane passes run Pro3 to Gly23, Leu37 to Leu57, Asp69 to Leu89, Leu110 to Phe132, Cys147 to Gly167, and Met172 to Gly192.

The protein belongs to the MntP (TC 9.B.29) family.

The protein localises to the cell inner membrane. Its function is as follows. Probably functions as a manganese efflux pump. In Xanthomonas axonopodis pv. citri (strain 306), this protein is Putative manganese efflux pump MntP.